The primary structure comprises 143 residues: Transcriptional regulator MraZ (143 aa).

SpoVT-AbrB domains lie at 5-47 and 76-119; these read EFEH…PLSE and AVQC…NKAR.

It belongs to the MraZ family. As to quaternary structure, forms oligomers.

The protein resides in the cytoplasm. The protein localises to the nucleoid. The sequence is that of Transcriptional regulator MraZ from Pediococcus pentosaceus (strain ATCC 25745 / CCUG 21536 / LMG 10740 / 183-1w).